A 281-amino-acid chain; its full sequence is NAC domain-containing protein 6 (281 aa).

The 153-residue stretch at 4-156 (LPVGSRFCPT…QDALTGFADQ (153 aa)) folds into the NAC domain. Disordered regions lie at residues 84–109 (GGSE…QKGD) and 211–249 (LEGH…VTQE). Residues 94–109 (NDGKKEIKDGHMQKGD) show a composition bias toward basic and acidic residues. The DNA-binding element occupies 109 to 162 (DGLRASDDLQKVVLCRIRYKKEANVNEFGLVNHQAHQTQDALTGFADQLEMMLE). The segment covering 229-239 (QQQQQQQQQQQ) has biased composition (low complexity).

The protein resides in the nucleus. This is NAC domain-containing protein 6 (NAC006) from Arabidopsis thaliana (Mouse-ear cress).